We begin with the raw amino-acid sequence, 237 residues long: MPARLETCISDLDCASSSGSDLSGFLTDEEDCARLQQAASASGPPAPARRGAPNISRASEVPGAQDDEQERRRRRGRTRVRSEALLHSLRRSRRVKANDRERNRMHNLNAALDALRSVLPSFPDDTKLTKIETLRFAYNYIWALAETLRLADQGLPGGGARERLLPPQCVPCLPGPPSPASDAESWGSGAAAASPLSDPSSPAASEDFTYRPGDPVFSFPSLPKDLLHTTPCFIPYH.

The interval 35 to 83 (LQQAASASGPPAPARRGAPNISRASEVPGAQDDEQERRRRRGRTRVRSE) is disordered. Low complexity predominate over residues 38 to 53 (AASASGPPAPARRGAP). The bHLH domain maps to 92 to 144 (SRRVKANDRERNRMHNLNAALDALRSVLPSFPDDTKLTKIETLRFAYNYIWAL). Residues 175–209 (GPPSPASDAESWGSGAAAASPLSDPSSPAASEDFT) form a disordered region. A compositionally biased stretch (low complexity) spans 180-207 (ASDAESWGSGAAAASPLSDPSSPAASED).

As to quaternary structure, efficient DNA binding requires dimerization with another bHLH protein. In terms of tissue distribution, expression restricted to the embryonic nervous system.

It is found in the nucleus. In terms of biological role, acts as a transcriptional regulator. Involved in the initiation of neuronal differentiation. Activates transcription by binding to the E box (5'-CANNTG-3'). Associates with chromatin to enhancer regulatory elements in genes encoding key transcriptional regulators of neurogenesis. The chain is Neurogenin-1 (NEUROG1) from Homo sapiens (Human).